The primary structure comprises 234 residues: Small ribosomal subunit protein eS1y (234 aa).

Over residues 1 to 18 (MAVGKNKRISKGKKGGKK) the composition is skewed to basic residues. The disordered stretch occupies residues 1–20 (MAVGKNKRISKGKKGGKKKA).

It belongs to the eukaryotic ribosomal protein eS1 family. In terms of assembly, component of the small ribosomal subunit. Mature ribosomes consist of a small (40S) and a large (60S) subunit. The 40S subunit contains about 33 different proteins and 1 molecule of RNA (18S). The 60S subunit contains about 49 different proteins and 3 molecules of RNA (25S, 5.8S and 5S).

The protein localises to the cytoplasm. The polypeptide is Small ribosomal subunit protein eS1y (Vitis vinifera (Grape)).